Here is a 115-residue protein sequence, read N- to C-terminus: Thioredoxin-1 (115 aa).

Positions 2–114 (LKRCNFKNQV…RQKVLEHVSA (113 aa)) constitute a Thioredoxin domain. Catalysis depends on nucleophile residues cysteine 39 and cysteine 42. Cysteines 39 and 42 form a disulfide.

Belongs to the thioredoxin family. In terms of tissue distribution, expressed in ASJ and ASI ciliated sensory neurons. Expressed in the intestine (at protein level).

Its function is as follows. Participates in various redox reactions through the reversible oxidation of its active center dithiol to a disulfide and catalyzes dithiol-disulfide exchange reactions. Shown to facilitate the reduction of insulin disulfide bonds. Might play a role in the reversible nitrosylation of cysteine residues in target proteins, and thereby contributing to the response to intracellular nitric oxide. Shapes the ASJ sensory neuron biphasic response to nitric oxide (NO) exposure; trans-nitrosylation activity might inhibit calcium flux to the cytoplasm in ASJ neurons when exposed to a NO stimulus, whereas de-nitrosylation activity might promote calcium flux when NO is diminished. By regulating the NO-induced ASJ sensory neuron activity, mediates the avoidance response to NO-producing organisms like P.aeruginosa. Positively regulates life span extension under normal and caloric restriction conditions, dauer formation and the oxidative stress response. Contributes to the down-regulation of expression of the insulin-like neuropeptide daf-28 in the ASJ neurons in a redox-independent fashion, thereby promoting dauer formation. Negatively regulates the nuclear localization of the intestinal skn-1 transcription factor in a p38 MAPK pathway-dependent and redox-independent fashion. The protein is Thioredoxin-1 (trx-1) of Caenorhabditis elegans.